The primary structure comprises 353 residues: MTAILERRESESLWGRFCNWITSTENRLYIGWFGVLMIPTLLTATSVFIIAFIAAPPVDIDGIREPVSGSLLYGNNIISGAIIPTSAAIGLHFYPIWEAASVDEWLYNGGPYELIVLHFLLGVACYMGREWELSFRLGMRPWIAVAYSAPVAAATAVFLIYPIGQGSFSDGMPLGISGTFNFMIVFQAEHNILMHPFHMLGVAGVFGGSLFSAMHGSLVTSSLIRETTENESANAGYRFGQEEETYNIVAAHGYFGRLIFQYASFNNSRSLHFFLAAWPVVGIWFTSLGISTMAFNLNGFNFNQSVVDSQGRVINTWADIINRANLGMEVMHERNAHNFPLDLAAIDAPSVNG.

Thr2 bears the N-acetylthreonine mark. Thr2 is subject to Phosphothreonine. A run of 3 helical transmembrane segments spans residues 29–46 (YIGW…TATS), 118–133 (HFLL…EWEL), and 142–156 (WIAV…AATA). His118 contacts chlorophyll a. Tyr126 is a pheophytin a binding site. Residues Asp170 and Glu189 each contribute to the [CaMn4O5] cluster site. Residues 197–218 (FHMLGVAGVFGGSLFSAMHGSL) traverse the membrane as a helical segment. His198 contacts chlorophyll a. A quinone is bound by residues His215 and 264–265 (SF). His215 is a binding site for Fe cation. Position 272 (His272) interacts with Fe cation. Residues 274 to 288 (FLAAWPVVGIWFTSL) form a helical membrane-spanning segment. [CaMn4O5] cluster-binding residues include His332, Glu333, Asp342, and Ala344. Positions 345-353 (AIDAPSVNG) are excised as a propeptide.

The protein belongs to the reaction center PufL/M/PsbA/D family. PSII is composed of 1 copy each of membrane proteins PsbA, PsbB, PsbC, PsbD, PsbE, PsbF, PsbH, PsbI, PsbJ, PsbK, PsbL, PsbM, PsbT, PsbX, PsbY, PsbZ, Psb30/Ycf12, at least 3 peripheral proteins of the oxygen-evolving complex and a large number of cofactors. It forms dimeric complexes. Requires The D1/D2 heterodimer binds P680, chlorophylls that are the primary electron donor of PSII, and subsequent electron acceptors. It shares a non-heme iron and each subunit binds pheophytin, quinone, additional chlorophylls, carotenoids and lipids. D1 provides most of the ligands for the Mn4-Ca-O5 cluster of the oxygen-evolving complex (OEC). There is also a Cl(-1) ion associated with D1 and D2, which is required for oxygen evolution. The PSII complex binds additional chlorophylls, carotenoids and specific lipids. as cofactor. Post-translationally, tyr-161 forms a radical intermediate that is referred to as redox-active TyrZ, YZ or Y-Z. C-terminally processed by CTPA; processing is essential to allow assembly of the oxygen-evolving complex and thus photosynthetic growth.

The protein localises to the plastid. It is found in the chloroplast thylakoid membrane. It catalyses the reaction 2 a plastoquinone + 4 hnu + 2 H2O = 2 a plastoquinol + O2. Functionally, photosystem II (PSII) is a light-driven water:plastoquinone oxidoreductase that uses light energy to abstract electrons from H(2)O, generating O(2) and a proton gradient subsequently used for ATP formation. It consists of a core antenna complex that captures photons, and an electron transfer chain that converts photonic excitation into a charge separation. The D1/D2 (PsbA/PsbD) reaction center heterodimer binds P680, the primary electron donor of PSII as well as several subsequent electron acceptors. This chain is Photosystem II protein D1, found in Coffea arabica (Arabian coffee).